We begin with the raw amino-acid sequence, 1946 residues long: Integrin beta-like protein E (1946 aa).

Residues 1–22 (MNNLFKFLFVLLAIFCPPISDL) form the signal peptide. Residues 23 to 1875 (VVSHGVPQQH…ATTQTTNNKT (1853 aa)) lie on the Extracellular side of the membrane. Residues asparagine 107, asparagine 134, and asparagine 203 are each glycosylated (N-linked (GlcNAc...) asparagine). Residues 423–460 (YGQNCDPTPPCDKGIPNEGILGDGKCMCINGYSGDKCD) enclose the EGF-like domain. 2 disulfide bridges follow: cysteine 433–cysteine 448 and cysteine 450–cysteine 459. Residues 514-699 (DVFVLVDVNV…AGLKSVLSNV (186 aa)) form the VWFA domain. N-linked (GlcNAc...) asparagine glycosylation is found at asparagine 705, asparagine 860, asparagine 1043, asparagine 1113, asparagine 1177, asparagine 1374, asparagine 1401, asparagine 1513, asparagine 1611, asparagine 1620, asparagine 1662, asparagine 1671, asparagine 1737, asparagine 1743, asparagine 1762, asparagine 1812, asparagine 1852, and asparagine 1873. The chain crosses the membrane as a helical span at residues 1876–1896 (VLTGAIAGAAAGTALIAAAAW). Topologically, residues 1897 to 1946 (KLLRKAAPPTDTFFSEAAFLGDGVNANPLYEQSASAAENPLYQSASDNTD) are cytoplasmic.

It belongs to the SIB family. As to quaternary structure, interacts with talA/talin.

Its subcellular location is the membrane. Functionally, implicated in cellular adhesion. The chain is Integrin beta-like protein E (sibE) from Dictyostelium discoideum (Social amoeba).